A 787-amino-acid polypeptide reads, in one-letter code: Exocyst complex component SEC15B (787 aa).

It belongs to the SEC15 family. The exocyst complex is composed of SEC3, SEC5, SEC6, SEC8, SEC10, EXO70A1 and EXO84B. Interacts with EXO84B. Binds to EXO70H1 AND EXO70B2. Binds directly to B1L.

Its subcellular location is the cytoplasm. The protein localises to the cytosol. The protein resides in the cytoskeleton. It is found in the phragmoplast. It localises to the secreted. Its subcellular location is the cell wall. The protein localises to the extracellular exosome. Component of the exocyst complex involved in the docking of exocytic vesicles with fusion sites on the plasma membrane during regulated or polarized secretion. Involved in polarized cell growth and organ morphogenesis. During cytokinesis, involved in cell plate initiation, cell plate maturation and formation of new primary cell wall. The protein is Exocyst complex component SEC15B of Arabidopsis thaliana (Mouse-ear cress).